The sequence spans 57 residues: uncharacterized protein (57 aa).

A disordered region spans residues 1–57 (MITPIGKNSNSNSNSNSNSNSNSNSNSNSNSNSNSNSNSNSNSNSNSNSNSNSNSNN). A compositionally biased stretch (low complexity) spans 8–57 (NSNSNSNSNSNSNSNSNSNSNSNSNSNSNSNSNSNSNSNSNSNSNSNSNN).

This is an uncharacterized protein from Dictyostelium discoideum (Social amoeba).